A 164-amino-acid polypeptide reads, in one-letter code: V-type proton ATPase subunit c' (164 aa).

Residues 1–15 (MTDDLVNEYAPAFAP) are Lumenal-facing. Residues 16–36 (FFGFAGCAAAMILSSLGAAIG) form a helical membrane-spanning segment. Over 37–58 (TAKSGIGISGIGTFRPELIMKS) the chain is Cytoplasmic. A helical membrane pass occupies residues 59–79 (LIPVVMSGILAVYGLVVAVLV). Residues 80–97 (AGGLSPTEEYTLFNGFMH) are Lumenal-facing. Residues 98–118 (LAAGLCVGFACLSSGYAIGIV) traverse the membrane as a helical segment. At 119 to 135 (GDVGVRKFMHQPRLFVG) the chain is on the cytoplasmic side. The helical transmembrane segment at 136–156 (IVLILIFAEVLGLYGMIIALI) threads the bilayer. At 157 to 164 (LNTRGSGN) the chain is on the lumenal side.

The protein belongs to the V-ATPase proteolipid subunit family. As to quaternary structure, V-ATPase is a heteromultimeric enzyme composed of a peripheral catalytic V1 complex (components A to H) attached to an integral membrane V0 proton pore complex (components: a, c, c', c'', d, e, f and VOA1). The decameric c-ring forms the proton-conducting pore, and is composed of eight proteolipid subunits c, one subunit c' and one subunit c''.

The protein resides in the vacuole membrane. Functionally, proton-conducting pore forming subunit of the V0 complex of vacuolar(H+)-ATPase (V-ATPase), a multisubunit enzyme composed of a peripheral complex (V1) that hydrolyzes ATP and a membrane integral complex (V0) that translocates protons. V-ATPase is responsible for acidifying and maintaining the pH of intracellular compartments. This Eremothecium gossypii (strain ATCC 10895 / CBS 109.51 / FGSC 9923 / NRRL Y-1056) (Yeast) protein is V-type proton ATPase subunit c' (VMA11).